A 692-amino-acid chain; its full sequence is Proprotein convertase subtilisin/kexin type 9 (692 aa).

The signal sequence occupies residues 1-30 (MGTVSSRRSWWPLPLPLLLLLLLGPAGARA). The propeptide occupies 31–152 (QEDEDGDYEE…IEEDSSVFAQ (122 aa)). At Tyr38 the chain carries Sulfotyrosine. Ser47 bears the Phosphoserine mark. Residues 77–149 (TYVVVLKEET…VDYIEEDSSV (73 aa)) enclose the Inhibitor I9 domain. The Peptidase S8 domain maps to 155 to 444 (PWNLERITPA…VLTPNLVAAL (290 aa)). Active-site charge relay system residues include Asp186 and His226. Intrachain disulfides connect Cys223-Cys255 and Cys323-Cys358. The active-site Charge relay system is Ser386. Residues 450 to 692 (RAGWQLFCRT…HLVQASQELQ (243 aa)) are C-terminal domain. 3 cysteine pairs are disulfide-bonded: Cys457–Cys527, Cys477–Cys526, and Cys486–Cys509. N-linked (GlcNAc...) asparagine glycosylation is present at Asn533. 6 cysteine pairs are disulfide-bonded: Cys534-Cys601, Cys552-Cys600, Cys562-Cys588, Cys608-Cys679, Cys626-Cys678, and Cys635-Cys654. Ser688 is modified (phosphoserine).

The protein belongs to the peptidase S8 family. As to quaternary structure, monomer. Can self-associate to form dimers and higher multimers which may have increased LDLR degrading activity. The precursor protein but not the mature protein may form multimers. Interacts with APOB, VLDLR, LRP8/APOER2 and BACE1. The full-length immature form (pro-PCSK9) interacts with SCNN1A, SCNN1B and SCNN1G. The pro-PCSK9 form (via C-terminal domain) interacts with LDLR. Interacts (via the C-terminal domain) with ANXA2 (via repeat Annexin 1); the interaction inhibits the degradation of LDLR. Requires Ca(2+) as cofactor. Post-translationally, cleavage by furin and PCSK5 generates a truncated inactive protein that is unable to induce LDLR degradation. In terms of processing, undergoes autocatalytic cleavage in the endoplasmic reticulum to release the propeptide from the N-terminus and the cleavage of the propeptide is strictly required for its maturation and activation. The cleaved propeptide however remains associated with the catalytic domain through non-covalent interactions, preventing potential substrates from accessing its active site. As a result, it is secreted from cells as a propeptide-containing, enzymatically inactive protein. Phosphorylation protects the propeptide against proteolysis.

The protein resides in the cytoplasm. Its subcellular location is the secreted. The protein localises to the endosome. It localises to the lysosome. It is found in the cell surface. The protein resides in the endoplasmic reticulum. Its subcellular location is the golgi apparatus. Its proteolytic activity is autoinhibited by the non-covalent binding of the propeptide to the catalytic domain. Inhibited by EGTA. In terms of biological role, crucial player in the regulation of plasma cholesterol homeostasis. Binds to low-density lipid receptor family members: low density lipoprotein receptor (LDLR), very low density lipoprotein receptor (VLDLR), apolipoprotein E receptor (LRP1/APOER) and apolipoprotein receptor 2 (LRP8/APOER2), and promotes their degradation in intracellular acidic compartments. Acts via a non-proteolytic mechanism to enhance the degradation of the hepatic LDLR through a clathrin LDLRAP1/ARH-mediated pathway. May prevent the recycling of LDLR from endosomes to the cell surface or direct it to lysosomes for degradation. Can induce ubiquitination of LDLR leading to its subsequent degradation. Inhibits intracellular degradation of APOB via the autophagosome/lysosome pathway in a LDLR-independent manner. Involved in the disposal of non-acetylated intermediates of BACE1 in the early secretory pathway. Inhibits epithelial Na(+) channel (ENaC)-mediated Na(+) absorption by reducing ENaC surface expression primarily by increasing its proteasomal degradation. Regulates neuronal apoptosis via modulation of LRP8/APOER2 levels and related anti-apoptotic signaling pathways. This is Proprotein convertase subtilisin/kexin type 9 (PCSK9) from Macaca nemestrina (Pig-tailed macaque).